A 463-amino-acid chain; its full sequence is Argininosuccinate lyase (463 aa).

This sequence belongs to the lyase 1 family. Argininosuccinate lyase subfamily.

The protein localises to the cytoplasm. The catalysed reaction is 2-(N(omega)-L-arginino)succinate = fumarate + L-arginine. It participates in amino-acid biosynthesis; L-arginine biosynthesis; L-arginine from L-ornithine and carbamoyl phosphate: step 3/3. The chain is Argininosuccinate lyase from Prochlorococcus marinus (strain NATL2A).